The chain runs to 301 residues: MIPTERGLQQVLEWGRSLTGFADEHAAEAVRGGQYILQRIHPSLRDTSARTGRDPQDETLIVAFYRELALLFWLDDCNDLDLIAPEQLAAVEQALGQGVPCALPGFEGCAVLRASLAALAYDRRDYAQLLDDTRCYCAALRAGHAQAAGAAERWSYAEYLHNGIDSIAYANVFCCLSLLWGLDMATLRARPAFRQVLRLISAIGRLQNDLHGRDKDRSAGEADNAAILLLERYPAMPVVEFLNDELAGHTRMLHRVMAEERFPAPWGPLIEAMAAIRAHYYQTSTSRYRSDAAGGGQHAPA.

This is an uncharacterized protein from Sinorhizobium fredii (strain NBRC 101917 / NGR234).